The following is a 127-amino-acid chain: Large ribosomal subunit protein bL20 (127 aa).

The protein belongs to the bacterial ribosomal protein bL20 family.

Functionally, binds directly to 23S ribosomal RNA and is necessary for the in vitro assembly process of the 50S ribosomal subunit. It is not involved in the protein synthesizing functions of that subunit. This chain is Large ribosomal subunit protein bL20, found in Bifidobacterium animalis subsp. lactis (strain AD011).